A 281-amino-acid chain; its full sequence is Pantothenate synthetase (281 aa).

Position 30–37 (30–37 (MGNLHQGH)) interacts with ATP. H37 functions as the Proton donor in the catalytic mechanism. Q61 serves as a coordination point for (R)-pantoate. Residue Q61 participates in beta-alanine binding. 149-152 (GNKD) contacts ATP. Q155 contributes to the (R)-pantoate binding site. ATP contacts are provided by residues I178 and 186–189 (MSSR).

It belongs to the pantothenate synthetase family. Homodimer.

It localises to the cytoplasm. It catalyses the reaction (R)-pantoate + beta-alanine + ATP = (R)-pantothenate + AMP + diphosphate + H(+). It participates in cofactor biosynthesis; (R)-pantothenate biosynthesis; (R)-pantothenate from (R)-pantoate and beta-alanine: step 1/1. Functionally, catalyzes the condensation of pantoate with beta-alanine in an ATP-dependent reaction via a pantoyl-adenylate intermediate. This chain is Pantothenate synthetase, found in Shewanella baltica (strain OS195).